The chain runs to 259 residues: 5'-nucleotidase SurE (259 aa).

4 residues coordinate a divalent metal cation: Asp8, Asp9, Ser40, and Asn92.

Belongs to the SurE nucleotidase family. A divalent metal cation serves as cofactor.

It localises to the cytoplasm. The catalysed reaction is a ribonucleoside 5'-phosphate + H2O = a ribonucleoside + phosphate. Functionally, nucleotidase that shows phosphatase activity on nucleoside 5'-monophosphates. In Stenotrophomonas maltophilia (strain R551-3), this protein is 5'-nucleotidase SurE.